The sequence spans 56 residues: Large ribosomal subunit protein bL32 (56 aa).

The segment at 1-23 (MAVQQNKSTRSKRGMRRSHNALP) is disordered. Over residues 9-19 (TRSKRGMRRSH) the composition is skewed to basic residues.

This sequence belongs to the bacterial ribosomal protein bL32 family.

The polypeptide is Large ribosomal subunit protein bL32 (Blochmanniella floridana).